Reading from the N-terminus, the 94-residue chain is Cell division topological specificity factor (94 aa).

This sequence belongs to the MinE family.

In terms of biological role, prevents the cell division inhibition by proteins MinC and MinD at internal division sites while permitting inhibition at polar sites. This ensures cell division at the proper site by restricting the formation of a division septum at the midpoint of the long axis of the cell. In Beijerinckia indica subsp. indica (strain ATCC 9039 / DSM 1715 / NCIMB 8712), this protein is Cell division topological specificity factor.